A 246-amino-acid polypeptide reads, in one-letter code: tRNA (guanine-N(7)-)-methyltransferase (246 aa).

S-adenosyl-L-methionine is bound by residues glutamate 77, glutamate 102, aspartate 129, and aspartate 152. Aspartate 152 is an active-site residue. Substrate is bound by residues lysine 156, aspartate 188, and 225–228; that span reads TKFE.

It belongs to the class I-like SAM-binding methyltransferase superfamily. TrmB family.

It catalyses the reaction guanosine(46) in tRNA + S-adenosyl-L-methionine = N(7)-methylguanosine(46) in tRNA + S-adenosyl-L-homocysteine. It participates in tRNA modification; N(7)-methylguanine-tRNA biosynthesis. Its function is as follows. Catalyzes the formation of N(7)-methylguanine at position 46 (m7G46) in tRNA. The polypeptide is tRNA (guanine-N(7)-)-methyltransferase (Haemophilus influenzae (strain 86-028NP)).